A 280-amino-acid chain; its full sequence is Lysosome-associated membrane glycoprotein 5 (280 aa).

The first 29 residues, 1 to 29, serve as a signal peptide directing secretion; that stretch reads MDLQGRGVPSIDRLRVLLMLFHTMAQIMA. Topologically, residues 30–235 are extracellular; it reads EQEVENLSGL…PVDEREQLEE (206 aa). Asparagine 35, asparagine 53, and asparagine 127 each carry an N-linked (GlcNAc...) asparagine glycan. The helical transmembrane segment at 236–256 threads the bilayer; the sequence is TLPLILGLILGLVIMVTLAIY. Over 257–280 the chain is Cytoplasmic; sequence HVHHKMTANQVQIPRDRSQYKHMG.

Belongs to the LAMP family. In terms of processing, glycosylated. As to expression, expressed in plasmocytoid dendritic cells. Expressed in suprabasal skin keratinocytes and squamous cells (at protein level). Expressed in the brain and weakly in spleen and skin. Expressed in plasmocytoid dendritic cells.

The protein localises to the cell membrane. It localises to the cytoplasmic vesicle. Its subcellular location is the secretory vesicle. It is found in the synaptic vesicle membrane. The protein resides in the endoplasmic reticulum-Golgi intermediate compartment membrane. The protein localises to the endosome membrane. It localises to the cytoplasmic vesicle membrane. Its subcellular location is the cell projection. It is found in the dendrite. The protein resides in the growth cone membrane. The protein localises to the early endosome membrane. It localises to the recycling endosome. Its function is as follows. Plays a role in short-term synaptic plasticity in a subset of GABAergic neurons in the brain. In Homo sapiens (Human), this protein is Lysosome-associated membrane glycoprotein 5 (LAMP5).